We begin with the raw amino-acid sequence, 304 residues long: Killer cell immunoglobulin-like receptor 2DS2 (304 aa).

The N-terminal stretch at 1-21 (MSLMVVSMACVGFFLLQGAWP) is a signal peptide. Topologically, residues 22-245 (HEGVHRKPSL…SKTGNPRHLH (224 aa)) are extracellular. Ig-like C2-type domains are found at residues 42 to 107 (EETV…VTHS) and 142 to 205 (GESV…FRDS). 2 disulfide bridges follow: C49–C100 and C149–C198. N-linked (GlcNAc...) asparagine glycosylation is found at N84, N178, and N211. Positions 220-239 (VTGNPSNSWPSPTEPSSKTG) are disordered. The chain crosses the membrane as a helical span at residues 246–265 (VLIGTSVVKIPFTILLFFLL). The Cytoplasmic portion of the chain corresponds to 266 to 304 (HRWCSNKKNAAVMDQEPAGNRTVNSEDSDEQDHQEVSYA). The tract at residues 280 to 304 (QEPAGNRTVNSEDSDEQDHQEVSYA) is disordered.

Belongs to the immunoglobulin superfamily.

The protein resides in the cell membrane. Receptor on natural killer (NK) cells for HLA-C alleles. Does not inhibit the activity of NK cells. This is Killer cell immunoglobulin-like receptor 2DS2 from Homo sapiens (Human).